The chain runs to 263 residues: Palmitoyltransferase ZDHHC22 (263 aa).

The Cytoplasmic segment spans residues 1–9; the sequence is MLALRLLNV. A helical membrane pass occupies residues 10-30; the sequence is VAPAYFLCISLVTFVLQLFLF. Residues 31–47 are Lumenal-facing; it reads LPSMREDPTATPLFSPA. Residues 48–68 form a helical membrane-spanning segment; the sequence is VLHGALFLFLSANALGNYILV. Over 69–125 the chain is Cytoplasmic; sequence VQNSPDDLGACQGTSSQRPQRPPPSTHFCRVCARVTLRHDHHCFFTGNCIGSRNMRN. The DHHC domain occupies 91-131; the sequence is PPSTHFCRVCARVTLRHDHHCFFTGNCIGSRNMRNFILFCL. The active-site S-palmitoyl cysteine intermediate is the Cys-111. 2 helical membrane-spanning segments follow: residues 126–146 and 147–167; these read FILF…AGVA and YISA…TLLP. The Cytoplasmic segment spans residues 168–182; sequence TSISQFFSGAVLGSD. The chain crosses the membrane as a helical span at residues 183–203; that stretch reads MFVILMLYLWFAVGLACAGFC. Over 204–263 the chain is Lumenal; it reads CHQLLLILRGQTRYQVRKGVAVRARPWRKNLQEVFGKRWLLGLLVPMFNVGTESSKQQDK.

It belongs to the DHHC palmitoyltransferase family. As to quaternary structure, interacts with CNN3.

The protein resides in the endoplasmic reticulum membrane. Its subcellular location is the golgi apparatus membrane. The enzyme catalyses L-cysteinyl-[protein] + hexadecanoyl-CoA = S-hexadecanoyl-L-cysteinyl-[protein] + CoA. In terms of biological role, palmitoyltransferase that could catalyze the addition of palmitate onto various protein substrates and be involved in a variety of cellular processes. Catalyzes the palmitoylation of KCNMA1, regulating localization of KCNMA1 to the plasma membrane. Might also mediate palmitoylation of CNN3. The polypeptide is Palmitoyltransferase ZDHHC22 (Rattus norvegicus (Rat)).